The primary structure comprises 911 residues: Inter-alpha-trypsin inhibitor heavy chain H1 (911 aa).

The first 27 residues, 1 to 27 (MDGAMGPRGLLLCMYLVSLLILQAMPA), serve as a signal peptide directing secretion. A propeptide spanning residues 28 to 34 (LGSATGR) is cleaved from the precursor. The region spanning 37–166 (SSEKRQAVDT…KVTFQLTYEE (130 aa)) is the VIT domain. A glycan (S-linked (Hex...) cysteine) is linked at Cys60. Ser129 carries the post-translational modification Phosphoserine. The Phagocytosis uptake signal motif lies at 181-184 (VKPK). Cystine bridges form between Cys244-Cys247 and Cys268-Cys540. N-linked (GlcNAc...) (complex) asparagine glycosylation is present at Asn285. The VWFA domain maps to 290–450 (NKNVVFVIDI…FNFLEVMSME (161 aa)). The interval 387 to 911 (SLPELSNHAS…YTDYIVPDIF (525 aa)) is hyaluronan-binding. Phosphothreonine is present on residues Thr402 and Thr407. Asn588 carries N-linked (GlcNAc...) (complex) asparagine glycosylation. The O-linked (GalNAc...) threonine glycan is linked to Thr653. Asp672 bears the Aspartate 1-(chondroitin 4-sulfate)-ester mark. Positions 673 to 911 (PHFIIHVPQK…YTDYIVPDIF (239 aa)) are excised as a propeptide. Asn750 carries N-linked (GlcNAc...) asparagine glycosylation.

Belongs to the ITIH family. In terms of assembly, I-alpha-I plasma protease inhibitors are assembled from one or two heavy chains (HC) and one light chain, bikunin. Inter-alpha-inhibitor (I-alpha-I) is composed of ITIH1/HC1, ITIH2/HC2 and bikunin. Interacts with TNFAIP6 (via Link and CUB domains). Post-translationally, heavy chains are linked to bikunin via chondroitin 4-sulfate esterified to the alpha-carboxyl of the C-terminal aspartate after propeptide cleavage. In terms of processing, the S-linked glycan is composed of two 6-carbon sugars, possibly Glc or Gal.

It localises to the secreted. Its function is as follows. May act as a carrier of hyaluronan in serum or as a binding protein between hyaluronan and other matrix protein, including those on cell surfaces in tissues to regulate the localization, synthesis and degradation of hyaluronan which are essential to cells undergoing biological processes. Contains a potential peptide which could stimulate a broad spectrum of phagocytotic cells. The chain is Inter-alpha-trypsin inhibitor heavy chain H1 (ITIH1) from Homo sapiens (Human).